A 65-amino-acid polypeptide reads, in one-letter code: Carboxypeptidase A inhibitor (65 aa).

This sequence belongs to the protease inhibitor I44 family.

It is found in the secreted. Its function is as follows. Inhibits carboxypeptidase A. This Ascaris suum (Pig roundworm) protein is Carboxypeptidase A inhibitor.